The following is a 520-amino-acid chain: Protein-export membrane protein SecD (520 aa).

A run of 6 helical transmembrane segments spans residues 10–30 (IILL…PTLA), 364–384 (DSLL…FLRY), 391–411 (LPMI…AAGI), 417–437 (LSVI…LVII), 461–481 (FWVI…LAIL), and 483–503 (LGDL…GVLI).

The protein belongs to the SecD/SecF family. SecD subfamily. In terms of assembly, part of the protein translocation apparatus. Forms a complex with SecF.

The protein localises to the cell membrane. Involved in protein export. This chain is Protein-export membrane protein SecD, found in Haloquadratum walsbyi (strain DSM 16790 / HBSQ001).